The sequence spans 366 residues: 3-dehydroquinate synthase (366 aa).

Residues 74–79 (SGEAAK), 108–112 (GVVGD), 132–133 (TT), K144, K153, and 171–174 (FLRT) each bind NAD(+). Zn(2+) contacts are provided by E186, H249, and H266.

The protein belongs to the sugar phosphate cyclases superfamily. Dehydroquinate synthase family. Co(2+) serves as cofactor. It depends on Zn(2+) as a cofactor. Requires NAD(+) as cofactor.

Its subcellular location is the cytoplasm. It carries out the reaction 7-phospho-2-dehydro-3-deoxy-D-arabino-heptonate = 3-dehydroquinate + phosphate. It participates in metabolic intermediate biosynthesis; chorismate biosynthesis; chorismate from D-erythrose 4-phosphate and phosphoenolpyruvate: step 2/7. In terms of biological role, catalyzes the conversion of 3-deoxy-D-arabino-heptulosonate 7-phosphate (DAHP) to dehydroquinate (DHQ). The chain is 3-dehydroquinate synthase from Geobacillus kaustophilus (strain HTA426).